The primary structure comprises 358 residues: Fructose-bisphosphate aldolase 5, cytosolic (358 aa).

Residue Ser-2 is modified to N-acetylserine. Arg-39 serves as a coordination point for substrate. Cys-68 carries the S-glutathionyl cysteine; transient modification. Residue Cys-173 is modified to S-glutathionyl cysteine; transient; alternate. Cys-173 carries the post-translational modification S-nitrosocysteine; transient; alternate. Glu-183 functions as the Proton acceptor in the catalytic mechanism. Residue Lys-225 is the Schiff-base intermediate with dihydroxyacetone-P of the active site. Substrate contacts are provided by residues 266–268 and Arg-298; that span reads SGG. Ser-350 is subject to Phosphoserine.

Belongs to the class I fructose-bisphosphate aldolase family. In terms of assembly, homotetramer. Interacts with TRX3. Post-translationally, S-glutathionylated at Cys-68 and Cys-173. S-nitrosylated at Cys-173. In terms of tissue distribution, expressed in rosette leaves and cauline leaves.

The protein localises to the cytoplasm. The protein resides in the cytosol. The catalysed reaction is beta-D-fructose 1,6-bisphosphate = D-glyceraldehyde 3-phosphate + dihydroxyacetone phosphate. It functions in the pathway carbohydrate degradation; glycolysis; D-glyceraldehyde 3-phosphate and glycerone phosphate from D-glucose: step 4/4. In terms of biological role, fructose-bisphosphate aldolase that plays a key role in glycolysis and gluconeogenesis. The polypeptide is Fructose-bisphosphate aldolase 5, cytosolic (Arabidopsis thaliana (Mouse-ear cress)).